The primary structure comprises 363 residues: Methylthioribose-1-phosphate isomerase (363 aa).

The active-site Proton donor is the aspartate 253.

The protein belongs to the eIF-2B alpha/beta/delta subunits family. MtnA subfamily.

The protein localises to the cytoplasm. It is found in the nucleus. It carries out the reaction 5-(methylsulfanyl)-alpha-D-ribose 1-phosphate = 5-(methylsulfanyl)-D-ribulose 1-phosphate. It functions in the pathway amino-acid biosynthesis; L-methionine biosynthesis via salvage pathway; L-methionine from S-methyl-5-thio-alpha-D-ribose 1-phosphate: step 1/6. Functionally, catalyzes the interconversion of methylthioribose-1-phosphate (MTR-1-P) into methylthioribulose-1-phosphate (MTRu-1-P). The sequence is that of Methylthioribose-1-phosphate isomerase from Drosophila grimshawi (Hawaiian fruit fly).